Reading from the N-terminus, the 505-residue chain is GMP synthase [glutamine-hydrolyzing] (505 aa).

The Glutamine amidotransferase type-1 domain occupies 2–190 (SVVILDFGSQ…FLEICGVARD (189 aa)). The active-site Nucleophile is the C79. Catalysis depends on residues H165 and E167. One can recognise a GMPS ATP-PPase domain in the interval 191-380 (WNAEHIVDEL…LGLPDAIRMR (190 aa)). Position 218–224 (218–224 (SGGVDSS)) interacts with ATP.

Homodimer.

The catalysed reaction is XMP + L-glutamine + ATP + H2O = GMP + L-glutamate + AMP + diphosphate + 2 H(+). It participates in purine metabolism; GMP biosynthesis; GMP from XMP (L-Gln route): step 1/1. Functionally, catalyzes the synthesis of GMP from XMP. The sequence is that of GMP synthase [glutamine-hydrolyzing] from Deinococcus geothermalis (strain DSM 11300 / CIP 105573 / AG-3a).